The chain runs to 533 residues: CTP synthase (533 aa).

The amidoligase domain stretch occupies residues methionine 1–isoleucine 269. Serine 16 contributes to the CTP binding site. Residue serine 16 participates in UTP binding. ATP contacts are provided by residues glycine 17–valine 22 and aspartate 73. Mg(2+) contacts are provided by aspartate 73 and glutamate 143. CTP contacts are provided by residues aspartate 150–glutamate 152, lysine 190–glutamine 195, and lysine 226. UTP contacts are provided by residues lysine 190 to glutamine 195 and lysine 226. The 230-residue stretch at tyrosine 304 to isoleucine 533 folds into the Glutamine amidotransferase type-1 domain. L-glutamine is bound at residue glycine 355. Cysteine 382 serves as the catalytic Nucleophile; for glutamine hydrolysis. Residues leucine 383–glutamine 386, glutamate 406, and arginine 466 contribute to the L-glutamine site. Active-site residues include histidine 511 and glutamate 513.

It belongs to the CTP synthase family. Homotetramer.

The enzyme catalyses UTP + L-glutamine + ATP + H2O = CTP + L-glutamate + ADP + phosphate + 2 H(+). The catalysed reaction is L-glutamine + H2O = L-glutamate + NH4(+). It carries out the reaction UTP + NH4(+) + ATP = CTP + ADP + phosphate + 2 H(+). It functions in the pathway pyrimidine metabolism; CTP biosynthesis via de novo pathway; CTP from UDP: step 2/2. Its activity is regulated as follows. Allosterically activated by GTP, when glutamine is the substrate; GTP has no effect on the reaction when ammonia is the substrate. The allosteric effector GTP functions by stabilizing the protein conformation that binds the tetrahedral intermediate(s) formed during glutamine hydrolysis. Inhibited by the product CTP, via allosteric rather than competitive inhibition. Catalyzes the ATP-dependent amination of UTP to CTP with either L-glutamine or ammonia as the source of nitrogen. Regulates intracellular CTP levels through interactions with the four ribonucleotide triphosphates. The protein is CTP synthase of Borreliella burgdorferi (strain ATCC 35210 / DSM 4680 / CIP 102532 / B31) (Borrelia burgdorferi).